We begin with the raw amino-acid sequence, 141 residues long: Putative pre-16S rRNA nuclease (141 aa).

It belongs to the YqgF nuclease family.

Its subcellular location is the cytoplasm. Could be a nuclease involved in processing of the 5'-end of pre-16S rRNA. The protein is Putative pre-16S rRNA nuclease of Acetivibrio thermocellus (strain ATCC 27405 / DSM 1237 / JCM 9322 / NBRC 103400 / NCIMB 10682 / NRRL B-4536 / VPI 7372) (Clostridium thermocellum).